Reading from the N-terminus, the 270-residue chain is Formamidopyrimidine-DNA glycosylase (270 aa).

Proline 2 acts as the Schiff-base intermediate with DNA in catalysis. Catalysis depends on glutamate 3, which acts as the Proton donor. Catalysis depends on lysine 58, which acts as the Proton donor; for beta-elimination activity. DNA is bound by residues histidine 91, arginine 110, and arginine 151. The FPG-type zinc finger occupies 236 to 270 (FVYGRGGEFCKVCGSTLREIRLGQRASVYCPRCQR). The Proton donor; for delta-elimination activity role is filled by arginine 260.

Belongs to the FPG family. As to quaternary structure, monomer. Zn(2+) is required as a cofactor.

It catalyses the reaction Hydrolysis of DNA containing ring-opened 7-methylguanine residues, releasing 2,6-diamino-4-hydroxy-5-(N-methyl)formamidopyrimidine.. It carries out the reaction 2'-deoxyribonucleotide-(2'-deoxyribose 5'-phosphate)-2'-deoxyribonucleotide-DNA = a 3'-end 2'-deoxyribonucleotide-(2,3-dehydro-2,3-deoxyribose 5'-phosphate)-DNA + a 5'-end 5'-phospho-2'-deoxyribonucleoside-DNA + H(+). In terms of biological role, involved in base excision repair of DNA damaged by oxidation or by mutagenic agents. Acts as a DNA glycosylase that recognizes and removes damaged bases. Has a preference for oxidized purines, such as 7,8-dihydro-8-oxoguanine (8-oxoG). Has AP (apurinic/apyrimidinic) lyase activity and introduces nicks in the DNA strand. Cleaves the DNA backbone by beta-delta elimination to generate a single-strand break at the site of the removed base with both 3'- and 5'-phosphates. This Pseudomonas aeruginosa (strain LESB58) protein is Formamidopyrimidine-DNA glycosylase.